A 330-amino-acid chain; its full sequence is L-asparaginase (330 aa).

Positions proline 4–tyrosine 330 constitute an Asparaginase/glutaminase domain. Catalysis depends on threonine 14, which acts as the O-isoaspartyl threonine intermediate. Threonine 93–aspartate 94 contributes to the substrate binding site.

This sequence belongs to the asparaginase 1 family. As to quaternary structure, homotetramer.

It localises to the cytoplasm. It carries out the reaction L-asparagine + H2O = L-aspartate + NH4(+). This chain is L-asparaginase (ansA), found in Wolinella succinogenes (strain ATCC 29543 / DSM 1740 / CCUG 13145 / JCM 31913 / LMG 7466 / NCTC 11488 / FDC 602W) (Vibrio succinogenes).